The following is a 382-amino-acid chain: Lipid-A-disaccharide synthase (382 aa).

The protein belongs to the LpxB family.

The catalysed reaction is 2-N,3-O-bis[(3R)-3-hydroxytetradecanoyl]-alpha-D-glucosaminyl 1-phosphate + UDP-2-N,3-O-bis[(3R)-3-hydroxytetradecanoyl]-alpha-D-glucosamine = lipid A disaccharide (E. coli) + UDP + H(+). It carries out the reaction a lipid X + a UDP-2-N,3-O-bis[(3R)-3-hydroxyacyl]-alpha-D-glucosamine = a lipid A disaccharide + UDP + H(+). It functions in the pathway glycolipid biosynthesis; lipid IV(A) biosynthesis; lipid IV(A) from (3R)-3-hydroxytetradecanoyl-[acyl-carrier-protein] and UDP-N-acetyl-alpha-D-glucosamine: step 5/6. Functionally, condensation of UDP-2,3-diacylglucosamine and 2,3-diacylglucosamine-1-phosphate to form lipid A disaccharide, a precursor of lipid A, a phosphorylated glycolipid that anchors the lipopolysaccharide to the outer membrane of the cell. In Escherichia coli (strain ATCC 8739 / DSM 1576 / NBRC 3972 / NCIMB 8545 / WDCM 00012 / Crooks), this protein is Lipid-A-disaccharide synthase.